The following is a 739-amino-acid chain: Probable beta-glucosidase L (739 aa).

A signal peptide spans 1–17 (MQTLFLSLLAAAVTVHA). N40 and N224 each carry an N-linked (GlcNAc...) asparagine glycan. D252 is an active-site residue. The N-linked (GlcNAc...) asparagine glycan is linked to N398.

The protein belongs to the glycosyl hydrolase 3 family.

It localises to the secreted. It catalyses the reaction Hydrolysis of terminal, non-reducing beta-D-glucosyl residues with release of beta-D-glucose.. The protein operates within glycan metabolism; cellulose degradation. Its function is as follows. Beta-glucosidases are one of a number of cellulolytic enzymes involved in the degradation of cellulosic biomass. Catalyzes the last step releasing glucose from the inhibitory cellobiose. This chain is Probable beta-glucosidase L (bglL), found in Aspergillus fumigatus (strain ATCC MYA-4609 / CBS 101355 / FGSC A1100 / Af293) (Neosartorya fumigata).